The following is a 364-amino-acid chain: Zinc finger protein CONSTANS-LIKE 12 (364 aa).

Zn(2+) contacts are provided by Cys5, Cys8, Cys28, and His33. The B box-type 1; atypical zinc-finger motif lies at Cys5 to Ile47. The B box-type 2; degenerate zinc-finger motif lies at Cys48–Leu88. Residues Gln280–Ser322 form the CCT domain.

This sequence belongs to the CONSTANS family.

It localises to the nucleus. The protein is Zinc finger protein CONSTANS-LIKE 12 (COL12) of Arabidopsis thaliana (Mouse-ear cress).